A 615-amino-acid polypeptide reads, in one-letter code: MSVTQKKTEISTTTTYEGESRPSSGMSGFSYSAKIHPRTSGYINRSSQSPFRSSMGSNAAYTRSYDFSYGATAMPGRYANISSTGVNHVKANREREKQDMRDLNERFANYIEKVRFLEAQNKKLAGELEELKSKWGKETSAIKEMYETELEEARKLIDATNKEKITLDVRVTELIDQLERQQKDLEESRTYHQIDQEQIARQNQQLADLEGEISMLRRSIESLEKEKMRQSNILAKMNDEMEKMRMDLNNETINHLDAENRRQTLEEELEFQKDVHAQELKELAALAYRDTTAENREFWRNELAQAIRDIQQEYDAKCDQMRGDIEAYYNLKVQEFRTGATKQNMEVTRNKEENTKLKSNMTEIRNRLADLEARNAQLERTNQDLLRDLEEKDRQNELESCQYKEEITKLRGEMESILKELQDLMDIKLSLELEIAAYRKLLEGEESRVGMKQIVEQVVGARPNEAEVLSTILTRSEGGYEATGDSQISMKMMRGELAAKTTYQRTSKGSVSIKEADSQGCFIALETKKEENLTGWKIVRKVDDNKVYTYEIPNLVLKTGTVVKIWSKNHQAQARGDDLVSRENDTWGTGSNVVTILQNEKGEDKANYTQNTVYQ.

Residues 1-31 are disordered; sequence MSVTQKKTEISTTTTYEGESRPSSGMSGFSY. The interval 1–99 is head; sequence MSVTQKKTEI…KANREREKQD (99 aa). The segment covering 21-30 has biased composition (polar residues); that stretch reads RPSSGMSGFS. An IF rod domain is found at 96–449; that stretch reads EKQDMRDLNE…KLLEGEESRV (354 aa). Positions 100 to 135 are coil 1A; it reads MRDLNERFANYIEKVRFLEAQNKKLAGELEELKSKW. The segment at 136–145 is linker 1; it reads GKETSAIKEM. The tract at residues 146–284 is coil 1B; the sequence is YETELEEARK…VHAQELKELA (139 aa). A linker 12 region spans residues 285–303; sequence ALAYRDTTAENREFWRNEL. Positions 304-449 are coil 2; the sequence is AQAIRDIQQE…KLLEGEESRV (146 aa). The tail stretch occupies residues 450 to 615; sequence GMKQIVEQVV…ANYTQNTVYQ (166 aa). Residues 499-612 form the LTD domain; sequence AKTTYQRTSK…EDKANYTQNT (114 aa).

Belongs to the intermediate filament family.

In Doryteuthis pealeii (Longfin inshore squid), this protein is 70 kDa neurofilament protein.